The primary structure comprises 122 residues: Autophagy-related protein 8e (122 aa).

The Phosphatidylethanolamine amidated glycine moiety is linked to residue G118. The propeptide at 119–122 is removed in mature form; the sequence is ASSI.

It belongs to the ATG8 family. In terms of assembly, interacts with ATG4. Interacts with SH3P2. Interacts with ATG1A and ATG11. Binds to ATG1A and ATG11 on autophagic vesicles. In terms of processing, the C-terminal 4 residues are removed by ATG4 to expose Gly-118 at the C-terminus. This Gly-118 forms then a thioester bond with the 'Cys-558' of ATG7 (E1-like activating enzyme) before being transferred to the 'Cys-258' of ATG3 (the specific E2 conjugating enzyme), in order to be finally amidated with phosphatidylethanolamine. This lipid modification anchors ATG8 to autophagosomes. In terms of tissue distribution, constitutively expressed.

It localises to the cytoplasmic vesicle. The protein localises to the autophagosome membrane. Its subcellular location is the vacuole membrane. The protein resides in the cytoplasm. It is found in the cytoskeleton. Ubiquitin-like modifier involved in autophagosomes formation. May mediate the delivery of the autophagosomes to the vacuole via the microtubule cytoskeleton. This chain is Autophagy-related protein 8e (ATG8E), found in Arabidopsis thaliana (Mouse-ear cress).